Here is a 458-residue protein sequence, read N- to C-terminus: SLIT-ROBO Rho GTPase-activating protein 2B (458 aa).

Positions 22–324 (KEIRAQLTEQ…AVENLDATSD (303 aa)) constitute an F-BAR domain. Positions 181–203 (LKEAEKQEEKQIGKSVKQEDRQT) are enriched in basic and acidic residues. Positions 181 to 214 (LKEAEKQEEKQIGKSVKQEDRQTPRSPDSTANVR) are disordered. Residues 362-400 (QSELLQRCQQLQSRLSTLKIENEEVKKTMEATLQTIQDI) adopt a coiled-coil conformation.

As to quaternary structure, may interact with SRGAP2; formation of the heterodimer alters SRGAP2 function.

May regulate cell migration and differentiation through interaction with and inhibition of SRGAP2. In contrast to SRGAP2C, it is not able to induce long-lasting changes in synaptic density throughout adulthood. The polypeptide is SLIT-ROBO Rho GTPase-activating protein 2B (SRGAP2B) (Homo sapiens (Human)).